A 962-amino-acid polypeptide reads, in one-letter code: MPRSTWFKALLLFVALWAPLSQAETGWQPIQETIRKSDKDNRQYQAIRLDNGMVVLLVSDPQAVKSLSALVVPVGSLEDPEAYQGLAHYLEHMSLMGSKKYPQADSLAEYLKMHGGSHNASTAPYRTAFYLEVENDALPGAVDRLADAIAEPLLDKKYAERERNAVNAELTMARTRDGMRMAQVSAETINPAHPGSKFSGGNLETLSDKPGNPVQQALKDFHEKYYSANLMKAVIYSNKPLPELAKMAADTFGRVPNKESKKPEITVPVVTDAQKGIIIHYVPALPRKVLRVEFRIDNNSAKFRSKTDELITYLIGNRSPGTLSDWLQKQGLVEGISANSDPIVNGNSGVLAISASLTDKGLANRDQVVAAIFSYLNLLREKGIDKQYFDELANVLDIDFRYPSITRDMDYVEWLADTMIRVPVEHTLDAVNIADRYDAKAVKERLAMMTPQNARIWYISPKEPHNKTAYFVDAPYQVDKISAQTFADWQKKAADIALSLPELNPYIPDDFSLIKSEKKYDHPELIVDESNLRVVYAPSRYFASEPKADVSLILRNPKAMDSARNQVMFALNDYLAGLALDQLSNQASVGGISFSTNANNGLMINANGYTQRLPQLFQALLEGYFSYTATEEQLEQAKSWYNQMMDSAEKGKAFEQAIMPAQMLSQVPYFSRDERRKILPSITLKEVLAYRDALKSGARPEFMVIGNMTEAQATTLARDVQKQLGADGSEWCRNKDVVVDKKQSVIFEKAGNSTDSALAAVFVPTGYDEYTSSAYSSLLGQIVQPWFYNQLRTEEQLGYAVFAFPMSVGRQWGMGFLLQSNDKQPSFLWERYKAFFPTAEAKLRAMKPDEFAQIQQAVITQMLQAPQTLGEEASKLSKDFDRGNMRFDSRDKIVAQIKLLTPQKLADFFHQAVVEPQGMAILSQISGSQNGKAEYVHPEGWKVWENVSALQQTMPLMSEKNE.

The N-terminal stretch at 1–23 (MPRSTWFKALLLFVALWAPLSQA) is a signal peptide. His-88 is a Zn(2+) binding site. Glu-91 functions as the Proton acceptor in the catalytic mechanism. His-92 and Glu-169 together coordinate Zn(2+).

Belongs to the peptidase M16 family. As to quaternary structure, monomer. Requires Zn(2+) as cofactor.

The protein localises to the periplasm. The enzyme catalyses Preferential cleavage of 16-Tyr-|-Leu-17 and 25-Phe-|-Tyr-26 bonds of oxidized insulin B chain. Also acts on other substrates of Mw less than 7 kDa such as insulin and glucagon.. Its function is as follows. Endopeptidase that degrades small peptides of less than 7 kDa, such as glucagon and insulin. The chain is Protease 3 (ptrA) from Shigella flexneri.